The primary structure comprises 922 residues: Isoleucine--tRNA ligase (922 aa).

A 'HIGH' region motif is present at residues Pro57–His67. Glu553 is an L-isoleucyl-5'-AMP binding site. Positions Lys594–Ser598 match the 'KMSKS' region motif. An ATP-binding site is contributed by Lys597. Residues Cys892, Cys895, Cys912, and Cys915 each contribute to the Zn(2+) site.

This sequence belongs to the class-I aminoacyl-tRNA synthetase family. IleS type 1 subfamily. As to quaternary structure, monomer. Requires Zn(2+) as cofactor.

It localises to the cytoplasm. The enzyme catalyses tRNA(Ile) + L-isoleucine + ATP = L-isoleucyl-tRNA(Ile) + AMP + diphosphate. Catalyzes the attachment of isoleucine to tRNA(Ile). As IleRS can inadvertently accommodate and process structurally similar amino acids such as valine, to avoid such errors it has two additional distinct tRNA(Ile)-dependent editing activities. One activity is designated as 'pretransfer' editing and involves the hydrolysis of activated Val-AMP. The other activity is designated 'posttransfer' editing and involves deacylation of mischarged Val-tRNA(Ile). In Desulfitobacterium hafniense (strain DSM 10664 / DCB-2), this protein is Isoleucine--tRNA ligase.